Consider the following 231-residue polypeptide: Small ribosomal subunit protein uS3 (231 aa).

The KH type-2 domain maps to 39–107 (IRELLHKELK…DVVLNIVEIR (69 aa)).

It belongs to the universal ribosomal protein uS3 family. Part of the 30S ribosomal subunit. Forms a tight complex with proteins S10 and S14.

Functionally, binds the lower part of the 30S subunit head. Binds mRNA in the 70S ribosome, positioning it for translation. The sequence is that of Small ribosomal subunit protein uS3 from Nitrobacter winogradskyi (strain ATCC 25391 / DSM 10237 / CIP 104748 / NCIMB 11846 / Nb-255).